Here is a 1049-residue protein sequence, read N- to C-terminus: Carbamoyl phosphate synthase large chain (1049 aa).

The tract at residues 1–399 (MRESVRKVLV…SLQKAVRMLD (399 aa)) is carboxyphosphate synthetic domain. Residues Arg-127, Arg-167, Gly-173, Gly-174, Lys-206, Leu-208, Glu-213, Gly-239, Val-240, His-241, Gln-282, and Glu-296 each coordinate ATP. The 195-residue stretch at 131–325 (RETMINVGLP…LAYVSAKLAL (195 aa)) folds into the ATP-grasp 1 domain. Positions 282, 296, and 298 each coordinate Mg(2+). Gln-282, Glu-296, and Asn-298 together coordinate Mn(2+). Residues 400–548 (IGEPGVVGGK…LTYNGTEDDI (149 aa)) are oligomerization domain. The carbamoyl phosphate synthetic domain stretch occupies residues 549-930 (EFSEAGNKLL…LKSWLSSSPN (382 aa)). The region spanning 674-864 (SKLLDKLGIK…IISLALDGIL (191 aa)) is the ATP-grasp 2 domain. 10 residues coordinate ATP: Arg-710, Lys-749, Leu-751, Glu-756, Gly-780, Val-781, His-782, Ser-783, Gln-823, and Glu-835. Mg(2+) contacts are provided by Gln-823, Glu-835, and Asn-837. Mn(2+)-binding residues include Gln-823, Glu-835, and Asn-837. Positions 930–1049 (NKIPNKEGIA…YEISEYGAGI (120 aa)) constitute an MGS-like domain. Positions 931–1049 (KIPNKEGIAL…YEISEYGAGI (119 aa)) are allosteric domain.

This sequence belongs to the CarB family. As to quaternary structure, composed of two chains; the small (or glutamine) chain promotes the hydrolysis of glutamine to ammonia, which is used by the large (or ammonia) chain to synthesize carbamoyl phosphate. Tetramer of heterodimers (alpha,beta)4. It depends on Mg(2+) as a cofactor. Mn(2+) serves as cofactor.

The catalysed reaction is hydrogencarbonate + L-glutamine + 2 ATP + H2O = carbamoyl phosphate + L-glutamate + 2 ADP + phosphate + 2 H(+). It carries out the reaction hydrogencarbonate + NH4(+) + 2 ATP = carbamoyl phosphate + 2 ADP + phosphate + 2 H(+). Its pathway is amino-acid biosynthesis; L-arginine biosynthesis; carbamoyl phosphate from bicarbonate: step 1/1. The protein operates within pyrimidine metabolism; UMP biosynthesis via de novo pathway; (S)-dihydroorotate from bicarbonate: step 1/3. Large subunit of the glutamine-dependent carbamoyl phosphate synthetase (CPSase). CPSase catalyzes the formation of carbamoyl phosphate from the ammonia moiety of glutamine, carbonate, and phosphate donated by ATP, constituting the first step of 2 biosynthetic pathways, one leading to arginine and/or urea and the other to pyrimidine nucleotides. The large subunit (synthetase) binds the substrates ammonia (free or transferred from glutamine from the small subunit), hydrogencarbonate and ATP and carries out an ATP-coupled ligase reaction, activating hydrogencarbonate by forming carboxy phosphate which reacts with ammonia to form carbamoyl phosphate. The protein is Carbamoyl phosphate synthase large chain of Sulfurisphaera tokodaii (strain DSM 16993 / JCM 10545 / NBRC 100140 / 7) (Sulfolobus tokodaii).